The primary structure comprises 224 residues: uncharacterized protein (224 aa).

The next 6 membrane-spanning stretches (helical) occupy residues 25 to 45 (MMLALAIITSLISEFISIPFF), 54 to 74 (ISVVFLVACAFFVSLGWSLTI), 91 to 111 (IGVLTVTLANLSTILFTRLYF), 119 to 139 (FCWIFVFLFTTLSNALLLTTL), 142 to 162 (ILITPLFWYYFGYVQTPNFLI), and 174 to 194 (HFFFFGINNYWLGIFCLYSFF).

It is found in the cell membrane. This is an uncharacterized protein from Mycoplasma genitalium (strain ATCC 33530 / DSM 19775 / NCTC 10195 / G37) (Mycoplasmoides genitalium).